The primary structure comprises 352 residues: Ferredoxin--NADP reductase 2 (352 aa).

FAD is bound by residues Glu-36, Lys-44, Tyr-48, Ile-88, Leu-123, Asp-290, and Ser-331.

This sequence belongs to the ferredoxin--NADP reductase type 2 family. As to quaternary structure, homodimer. FAD is required as a cofactor.

It carries out the reaction 2 reduced [2Fe-2S]-[ferredoxin] + NADP(+) + H(+) = 2 oxidized [2Fe-2S]-[ferredoxin] + NADPH. The polypeptide is Ferredoxin--NADP reductase 2 (Exiguobacterium sibiricum (strain DSM 17290 / CCUG 55495 / CIP 109462 / JCM 13490 / 255-15)).